Here is a 208-residue protein sequence, read N- to C-terminus: 3-demethoxyubiquinol 3-hydroxylase (208 aa).

Fe cation is bound by residues Glu-57, Glu-87, His-90, Glu-139, Glu-171, and His-174.

The protein belongs to the COQ7 family. The cofactor is Fe cation.

It is found in the cell membrane. It catalyses the reaction a 5-methoxy-2-methyl-3-(all-trans-polyprenyl)benzene-1,4-diol + AH2 + O2 = a 3-demethylubiquinol + A + H2O. It functions in the pathway cofactor biosynthesis; ubiquinone biosynthesis. In terms of biological role, catalyzes the hydroxylation of 2-nonaprenyl-3-methyl-6-methoxy-1,4-benzoquinol during ubiquinone biosynthesis. In Janthinobacterium sp. (strain Marseille) (Minibacterium massiliensis), this protein is 3-demethoxyubiquinol 3-hydroxylase.